A 134-amino-acid chain; its full sequence is Ribosome-binding factor A (134 aa).

The protein belongs to the RbfA family. In terms of assembly, monomer. Binds 30S ribosomal subunits, but not 50S ribosomal subunits or 70S ribosomes.

It is found in the cytoplasm. Functionally, one of several proteins that assist in the late maturation steps of the functional core of the 30S ribosomal subunit. Associates with free 30S ribosomal subunits (but not with 30S subunits that are part of 70S ribosomes or polysomes). Required for efficient processing of 16S rRNA. May interact with the 5'-terminal helix region of 16S rRNA. This Parasynechococcus marenigrum (strain WH8102) protein is Ribosome-binding factor A.